Consider the following 217-residue polypeptide: MNQSLLAPFGTAIERVEAGLNALRQGLGVLVVDDEDRENEGDLIFAAESLTNAQMAMLIRECSGIVCLCLPDEKVKALALPPMVENNSSQYGTAFTVSIEAKVGVTTGVSAADRVTTIKTAIADHAKPSDLARPGHVYPLRAQPGGVLTRRGHTEGTIDLMQLAGLKPAGVLCEVTNPDGTMARLPEIIAFGALHNMPVLTIEDIVVYRKSLLANVG.

Residues 37 to 38 (RE), aspartate 42, 150 to 154 (RRGHT), and glutamate 174 each bind D-ribulose 5-phosphate. A Mg(2+)-binding site is contributed by glutamate 38. Mg(2+) is bound at residue histidine 153.

This sequence belongs to the DHBP synthase family. As to quaternary structure, homodimer. Mg(2+) serves as cofactor. Requires Mn(2+) as cofactor.

The catalysed reaction is D-ribulose 5-phosphate = (2S)-2-hydroxy-3-oxobutyl phosphate + formate + H(+). It functions in the pathway cofactor biosynthesis; riboflavin biosynthesis; 2-hydroxy-3-oxobutyl phosphate from D-ribulose 5-phosphate: step 1/1. Functionally, catalyzes the conversion of D-ribulose 5-phosphate to formate and 3,4-dihydroxy-2-butanone 4-phosphate. In Shewanella oneidensis (strain ATCC 700550 / JCM 31522 / CIP 106686 / LMG 19005 / NCIMB 14063 / MR-1), this protein is 3,4-dihydroxy-2-butanone 4-phosphate synthase.